We begin with the raw amino-acid sequence, 962 residues long: Glycine dehydrogenase (decarboxylating) (962 aa).

Position 709 is an N6-(pyridoxal phosphate)lysine (Lys-709).

It belongs to the GcvP family. The glycine cleavage system is composed of four proteins: P, T, L and H. Requires pyridoxal 5'-phosphate as cofactor.

The enzyme catalyses N(6)-[(R)-lipoyl]-L-lysyl-[glycine-cleavage complex H protein] + glycine + H(+) = N(6)-[(R)-S(8)-aminomethyldihydrolipoyl]-L-lysyl-[glycine-cleavage complex H protein] + CO2. In terms of biological role, the glycine cleavage system catalyzes the degradation of glycine. The P protein binds the alpha-amino group of glycine through its pyridoxal phosphate cofactor; CO(2) is released and the remaining methylamine moiety is then transferred to the lipoamide cofactor of the H protein. The sequence is that of Glycine dehydrogenase (decarboxylating) from Shewanella sp. (strain MR-7).